Consider the following 261-residue polypeptide: MRESALERGPVPEAPAGGPVHAVTVVTLLEKLASMLETLRERQGGLARRQGGLAGSVRRIQSGLGALSRSHDTTSNTLAQLLAKAERVSSHANAAQERAVRRAAQVQRLEANHGLLVARGKLHVLLFKEEGEVPASAFQKAPEPLGPADQSELGPEQLEAEVGESSDEEPVESRAQRLRRTGLQKVQSLRRALSGRKGPAAPPPTPVKPPRLGPGRSAEAQPEAQPALEPTLEPEPPQDTEEDPGRPGAAEEALLQMESVA.

The segment at 1 to 84 (MRESALERGP…SNTLAQLLAK (84 aa)) is interaction with CAVIN1. Residues 20-78 (VHAVTVVTLLEKLASMLETLRERQGGLARRQGGLAGSVRRIQSGLGALSRSHDTTSNTL) are leucine-zipper. S62 and S70 each carry phosphoserine. K128 participates in a covalent cross-link: Glycyl lysine isopeptide (Lys-Gly) (interchain with G-Cter in SUMO2). An interaction with CAV1 region spans residues 135-203 (ASAFQKAPEP…SGRKGPAAPP (69 aa)). Positions 139–261 (QKAPEPLGPA…EALLQMESVA (123 aa)) are disordered. Residues 158-170 (LEAEVGESSDEEP) show a composition bias toward acidic residues. Phosphoserine occurs at positions 165, 166, and 173. Positions 200–212 (AAPPPTPVKPPRL) are enriched in pro residues. Residues 213–231 (GPGRSAEAQPEAQPALEPT) show a composition bias toward low complexity.

This sequence belongs to the CAVIN family. Component of the CAVIN complex composed of CAVIN1, CAVIN2, CAVIN3 and CAVIN4. Interacts with PRKCD and with phosphatidylserine. Phosphatidylserine may form a bridge between PKC and PKC-binding partners and stabilize the binding. Interacts with PER2. Interacts with CAVIN1. Interacts (via leucine-zipper domain) with CAV1 in a cholesterol-sensitive manner. Interacts with EPS15L1. In vitro, phosphorylated by PRKCD. In terms of tissue distribution, skeletal muscle, liver, stomach, lung, kidney and heart (at protein level). Strongly expressed in mammary and epithelial cells.

It localises to the cytoplasm. It is found in the membrane. Its subcellular location is the caveola. The protein resides in the cytosol. Functionally, regulates the traffic and/or budding of caveolae. Plays a role in caveola formation in a tissue-specific manner. Required for the formation of caveolae in smooth muscle but not in the lung and heart endothelial cells. Regulates the equilibrium between cell surface-associated and cell surface-dissociated caveolae by promoting the rapid release of caveolae from the cell surface. Plays a role in the regulation of the circadian clock. Modulates the period length and phase of circadian gene expression and also regulates expression and interaction of the core clock components PER1/2 and CRY1/2. This chain is Caveolae-associated protein 3, found in Homo sapiens (Human).